The primary structure comprises 1067 residues: Carbamoyl phosphate synthase large chain (1067 aa).

A carboxyphosphate synthetic domain region spans residues 1-401 (MPLNKDIKKV…AFLKGIRSLE (401 aa)). ATP is bound by residues Arg-129, Arg-169, Gly-175, Gly-176, Lys-208, Val-210, Glu-215, Gly-241, Ile-242, His-243, Gln-284, and Glu-298. Positions 133–327 (RDMMNRINQP…IAKVAAKIAL (195 aa)) constitute an ATP-grasp 1 domain. Mg(2+) is bound by residues Gln-284, Glu-298, and Asn-300. Gln-284, Glu-298, and Asn-300 together coordinate Mn(2+). The tract at residues 402 to 549 (IGKYSLEHKK…YSTYEQYDEV (148 aa)) is oligomerization domain. Positions 550 to 932 (VVSDNKKVVV…ALYKGFVGAS (383 aa)) are carbamoyl phosphate synthetic domain. Residues 674–864 (DDLLERLNIA…IVDIATRIML (191 aa)) form the ATP-grasp 2 domain. Residues Arg-710, Lys-749, Leu-751, Glu-755, Gly-780, Val-781, His-782, Ser-783, Gln-823, and Glu-835 each coordinate ATP. The Mg(2+) site is built by Gln-823, Glu-835, and Asn-837. Residues Gln-823, Glu-835, and Asn-837 each contribute to the Mn(2+) site. Residues 933–1067 (MYTGDKGKTI…NRELEVFNLI (135 aa)) enclose the MGS-like domain. The allosteric domain stretch occupies residues 933–1067 (MYTGDKGKTI…NRELEVFNLI (135 aa)).

The protein belongs to the CarB family. In terms of assembly, composed of two chains; the small (or glutamine) chain promotes the hydrolysis of glutamine to ammonia, which is used by the large (or ammonia) chain to synthesize carbamoyl phosphate. Tetramer of heterodimers (alpha,beta)4. Mg(2+) serves as cofactor. It depends on Mn(2+) as a cofactor.

The enzyme catalyses hydrogencarbonate + L-glutamine + 2 ATP + H2O = carbamoyl phosphate + L-glutamate + 2 ADP + phosphate + 2 H(+). It catalyses the reaction hydrogencarbonate + NH4(+) + 2 ATP = carbamoyl phosphate + 2 ADP + phosphate + 2 H(+). It functions in the pathway amino-acid biosynthesis; L-arginine biosynthesis; carbamoyl phosphate from bicarbonate: step 1/1. The protein operates within pyrimidine metabolism; UMP biosynthesis via de novo pathway; (S)-dihydroorotate from bicarbonate: step 1/3. Large subunit of the glutamine-dependent carbamoyl phosphate synthetase (CPSase). CPSase catalyzes the formation of carbamoyl phosphate from the ammonia moiety of glutamine, carbonate, and phosphate donated by ATP, constituting the first step of 2 biosynthetic pathways, one leading to arginine and/or urea and the other to pyrimidine nucleotides. The large subunit (synthetase) binds the substrates ammonia (free or transferred from glutamine from the small subunit), hydrogencarbonate and ATP and carries out an ATP-coupled ligase reaction, activating hydrogencarbonate by forming carboxy phosphate which reacts with ammonia to form carbamoyl phosphate. The chain is Carbamoyl phosphate synthase large chain from Clostridium perfringens (strain 13 / Type A).